The chain runs to 841 residues: Translation initiation factor IF-2 (841 aa).

Basic and acidic residues-rich tracts occupy residues 1–12 (MSDNEIKNEAPK), 52–92 (ALKA…EATK), 114–170 (EQPK…REEA), 188–202 (READRDNDRRSEANR), and 213–235 (KKGDREDKNERNADRRNQKDVKG). Disordered stretches follow at residues 1–24 (MSDNEIKNEAPKKLSLQRRTKTTV) and 52–246 (ALKA…GSAL). The region spanning 340-510 (TRAPVVTIMG…LLQSEVLELT (171 aa)) is the tr-type G domain. A G1 region spans residues 349-356 (GHVDHGKT). Residue 349-356 (GHVDHGKT) participates in GTP binding. The G2 stretch occupies residues 374 to 378 (GITQH). Positions 396-399 (DTPG) are G3. Residues 396–400 (DTPGH) and 450–453 (NKID) each bind GTP. Residues 450-453 (NKID) form a G4 region. A G5 region spans residues 486 to 488 (SAK).

This sequence belongs to the TRAFAC class translation factor GTPase superfamily. Classic translation factor GTPase family. IF-2 subfamily.

It is found in the cytoplasm. One of the essential components for the initiation of protein synthesis. Protects formylmethionyl-tRNA from spontaneous hydrolysis and promotes its binding to the 30S ribosomal subunits. Also involved in the hydrolysis of GTP during the formation of the 70S ribosomal complex. The chain is Translation initiation factor IF-2 from Actinobacillus pleuropneumoniae serotype 5b (strain L20).